The sequence spans 142 residues: Large ribosomal subunit protein bL17 (142 aa).

It belongs to the bacterial ribosomal protein bL17 family. In terms of assembly, part of the 50S ribosomal subunit. Contacts protein L32.

This chain is Large ribosomal subunit protein bL17, found in Protochlamydia amoebophila (strain UWE25).